A 392-amino-acid chain; its full sequence is Alanine--glyoxylate aminotransferase (392 aa).

Lys209 is subject to N6-(pyridoxal phosphate)lysine. An N6-acetyllysine; alternate modification is found at Lys225. Lys225 carries the N6-succinyllysine; alternate modification. 2 positions are modified to N6-acetyllysine: Lys234 and Lys312. A substrate-binding site is contributed by Arg360. The short motif at 390-392 (SQL) is the Microbody targeting signal element.

Belongs to the class-V pyridoxal-phosphate-dependent aminotransferase family. As to quaternary structure, homodimer. Pyridoxal 5'-phosphate is required as a cofactor.

It is found in the peroxisome. The enzyme catalyses L-serine + pyruvate = 3-hydroxypyruvate + L-alanine. It carries out the reaction glyoxylate + L-alanine = glycine + pyruvate. In terms of biological role, peroxisomal aminotransferase that catalyzes the transamination of glyoxylate to glycine and contributes to the glyoxylate detoxification. Also catalyzes the transamination between L-serine and pyruvate and contributes to gluconeogenesis from the L-serine metabolism. The chain is Alanine--glyoxylate aminotransferase from Oryctolagus cuniculus (Rabbit).